Consider the following 292-residue polypeptide: 2-(5''-triphosphoribosyl)-3'-dephosphocoenzyme-A synthase (292 aa).

It belongs to the CitG/MdcB family.

It carries out the reaction 3'-dephospho-CoA + ATP = 2'-(5''-triphospho-alpha-D-ribosyl)-3'-dephospho-CoA + adenine. In terms of biological role, catalyzes the formation of 2-(5''-triphosphoribosyl)-3'-dephosphocoenzyme-A, the precursor of the prosthetic group of the holo-acyl carrier protein (gamma chain) of citrate lyase, from ATP and dephospho-CoA. This Escherichia coli O127:H6 (strain E2348/69 / EPEC) protein is 2-(5''-triphosphoribosyl)-3'-dephosphocoenzyme-A synthase.